Consider the following 275-residue polypeptide: Mitochondrial outer membrane porin (275 aa).

The protein belongs to the eukaryotic mitochondrial porin (TC 1.B.8.1) family.

It localises to the mitochondrion outer membrane. Functionally, forms a channel through the cell membrane that allows diffusion of small hydrophilic molecules. The channel adopts an open conformation at low or zero membrane potential and a closed conformation at potentials above 30-40 mV. The open state has a weak anion selectivity whereas the closed state is cation-selective. The chain is Mitochondrial outer membrane porin (VDAC1) from Triticum aestivum (Wheat).